We begin with the raw amino-acid sequence, 114 residues long: Dolichyl-diphosphooligosaccharide--protein glycosyltransferase subunit DAD1 (114 aa).

Topologically, residues 1 to 30 are cytoplasmic; that stretch reads MPKAAGDAKLLIQSLNKAYAATPTNLKIID. Residues 31-51 traverse the membrane as a helical segment; sequence LYVVFAVVTALLQVVYMGIVG. Residue Ser52 is a topological domain, lumenal. The helical transmembrane segment at 53-73 threads the bilayer; sequence FPFNSFLSGVLSCIGTAVLAV. The Cytoplasmic segment spans residues 74-93; sequence CHRIQVNKDNKEFKDLAPER. The helical transmembrane segment at 94–114 threads the bilayer; that stretch reads AFADFVLCSLVLHLVIMNFLG.

The protein belongs to the DAD/OST2 family. As to quaternary structure, component of the oligosaccharyltransferase (OST) complex.

It localises to the endoplasmic reticulum membrane. Its pathway is protein modification; protein glycosylation. In terms of biological role, subunit of the oligosaccharyl transferase (OST) complex that catalyzes the initial transfer of a defined glycan (Glc(3)Man(9)GlcNAc(2) in eukaryotes) from the lipid carrier dolichol-pyrophosphate to an asparagine residue within an Asn-X-Ser/Thr consensus motif in nascent polypeptide chains, the first step in protein N-glycosylation. N-glycosylation occurs cotranslationally and the complex associates with the Sec61 complex at the channel-forming translocon complex that mediates protein translocation across the endoplasmic reticulum (ER). All subunits are required for a maximal enzyme activity. In Hordeum vulgare (Barley), this protein is Dolichyl-diphosphooligosaccharide--protein glycosyltransferase subunit DAD1 (DAD1).